Reading from the N-terminus, the 428-residue chain is Glutamate-1-semialdehyde 2,1-aminomutase (428 aa).

The residue at position 265 (Lys265) is an N6-(pyridoxal phosphate)lysine.

It belongs to the class-III pyridoxal-phosphate-dependent aminotransferase family. HemL subfamily. In terms of assembly, homodimer. Requires pyridoxal 5'-phosphate as cofactor.

It localises to the cytoplasm. It carries out the reaction (S)-4-amino-5-oxopentanoate = 5-aminolevulinate. It functions in the pathway porphyrin-containing compound metabolism; protoporphyrin-IX biosynthesis; 5-aminolevulinate from L-glutamyl-tRNA(Glu): step 2/2. The sequence is that of Glutamate-1-semialdehyde 2,1-aminomutase from Proteus mirabilis (strain HI4320).